Here is a 657-residue protein sequence, read N- to C-terminus: Glycogen debranching enzyme (657 aa).

The active-site Nucleophile is aspartate 336. The Proton donor role is filled by glutamate 371. The segment at 460 to 479 is disordered; that stretch reads ANGEENRDGTNNNYSNNHGK.

Belongs to the glycosyl hydrolase 13 family.

It catalyses the reaction Hydrolysis of (1-&gt;6)-alpha-D-glucosidic linkages to branches with degrees of polymerization of three or four glucose residues in limit dextrin.. It functions in the pathway glycan degradation; glycogen degradation. Functionally, removes maltotriose and maltotetraose chains that are attached by 1,6-alpha-linkage to the limit dextrin main chain, generating a debranched limit dextrin. In Escherichia coli (strain SMS-3-5 / SECEC), this protein is Glycogen debranching enzyme.